A 283-amino-acid polypeptide reads, in one-letter code: Pyridoxine/pyridoxal/pyridoxamine kinase (283 aa).

Positions 23 and 59 each coordinate substrate. An ATP-binding site is contributed by Asp125. Mg(2+) is bound at residue Tyr136. ATP contacts are provided by residues Thr157, Glu162, Thr195, 222-225 (HAHV), and Thr232. Glu162 lines the Mg(2+) pocket. Residue Asp234 coordinates substrate.

The protein belongs to the pyridoxine kinase family. PdxK subfamily. As to quaternary structure, homodimer. It depends on Mg(2+) as a cofactor.

It catalyses the reaction pyridoxal + ATP = pyridoxal 5'-phosphate + ADP + H(+). It carries out the reaction pyridoxine + ATP = pyridoxine 5'-phosphate + ADP + H(+). The enzyme catalyses pyridoxamine + ATP = pyridoxamine 5'-phosphate + ADP + H(+). Its pathway is cofactor metabolism; pyridoxal 5'-phosphate salvage; pyridoxal 5'-phosphate from pyridoxal: step 1/1. It functions in the pathway cofactor metabolism; pyridoxal 5'-phosphate salvage; pyridoxine 5'-phosphate from pyridoxine: step 1/1. It participates in cofactor metabolism; pyridoxal 5'-phosphate salvage; pyridoxamine 5'-phosphate from pyridoxamine: step 1/1. In terms of biological role, B6-vitamer kinase involved in the salvage pathway of pyridoxal 5'-phosphate (PLP). Catalyzes the phosphorylation of pyridoxine (PN), pyridoxal (PL), and pyridoxamine (PM), forming their respective 5'-phosphorylated esters, i.e. PNP, PLP and PMP. This Bordetella bronchiseptica (strain ATCC BAA-588 / NCTC 13252 / RB50) (Alcaligenes bronchisepticus) protein is Pyridoxine/pyridoxal/pyridoxamine kinase.